Reading from the N-terminus, the 699-residue chain is (E2-independent) E3 ubiquitin-conjugating enzyme FATS (699 aa).

The required for interaction with p53/TP53 stretch occupies residues 48–116 (MISSIVISQM…LGIPAPSDER (69 aa)). 3 disordered regions span residues 107-134 (LGIP…GGPR), 443-473 (KPTR…ERRH), and 528-569 (KSED…PARS). 2 stretches are compositionally biased toward basic and acidic residues: residues 113 to 129 (SDER…EERP) and 460 to 473 (CLSR…ERRH). The tract at residues 116 to 224 (RGPEAELPPK…GLCERRKYWV (109 aa)) is required for interaction with HDAC1. Residues 534 to 545 (TPEPSPAAPSPA) are compositionally biased toward pro residues. An ALMS motif region spans residues 571-699 (TLQEALEVRK…LDQLLQRNAV (129 aa)).

As to quaternary structure, interacts with HDAC1; the interaction prevents binding of HDAC1 to CDKN1A/p21 and facilitates the acetylation and stabilization of CDKN1A/p21. Interacts with p53/TP53; the interaction inhibits binding of p53/TP53 and MDM2.

It localises to the cytoplasm. The protein resides in the cytoskeleton. It is found in the microtubule organizing center. The protein localises to the centrosome. Its function is as follows. Tumor suppressor that is required to sustain G2/M checkpoint after DNA damage. Acts as a p53/TP53 activator by inhibiting MDM2 binding to p53/TP53 and stimulating non-proteolytic polyubiquitination of p53/TP53. Exhibits ubiquitin ligase (E3) activity and assemble ubiquitin polymers through 'Lys-11'- (K11-), 'Lys-29'- (K29-) and 'Lys-63'- (K63)-linkages, independently of the ubiquitin-conjugating enzyme (E2). Promotes p53/TP53-dependent transcription of CDKN1A/p21, leading to robust checkpoint response. Mediates CDKN1A/p21 protein stability in a ubiquitin-independent manner. Interacts with HDAC1 and prevents binding of HDAC1 to CDKN1A/p21 and facilitates the acetylation and stabilization of CDKN1A/p21. May have a role in the assembly of primary cilia. This Homo sapiens (Human) protein is (E2-independent) E3 ubiquitin-conjugating enzyme FATS.